We begin with the raw amino-acid sequence, 295 residues long: Protoheme IX farnesyltransferase 2 (295 aa).

9 helical membrane passes run 9–29 (ITKP…FFLA), 36–56 (LAVF…GCVF), 80–100 (LISL…GVAL), 108–128 (LAAL…SLYL), 135–155 (GTLV…VAVT), 163–183 (LTLL…IAIF), 209–229 (ILIY…SGYA), 230–250 (GMSY…MAWT), and 265–285 (FVFS…DFKV).

The protein belongs to the UbiA prenyltransferase family. Protoheme IX farnesyltransferase subfamily.

Its subcellular location is the cell inner membrane. The enzyme catalyses heme b + (2E,6E)-farnesyl diphosphate + H2O = Fe(II)-heme o + diphosphate. It participates in porphyrin-containing compound metabolism; heme O biosynthesis; heme O from protoheme: step 1/1. In terms of biological role, converts heme B (protoheme IX) to heme O by substitution of the vinyl group on carbon 2 of heme B porphyrin ring with a hydroxyethyl farnesyl side group. This chain is Protoheme IX farnesyltransferase 2, found in Pseudomonas fluorescens (strain Pf0-1).